The sequence spans 271 residues: Acetyl-coenzyme A carboxylase carboxyl transferase subunit alpha (271 aa).

A CoA carboxyltransferase C-terminal domain is found at 1 to 247; the sequence is MSRELIRTAD…KKTILEALGE (247 aa).

It belongs to the AccA family. As to quaternary structure, acetyl-CoA carboxylase is a heterohexamer composed of biotin carboxyl carrier protein (AccB), biotin carboxylase (AccC) and two subunits each of ACCase subunit alpha (AccA) and ACCase subunit beta (AccD).

The protein resides in the cytoplasm. It carries out the reaction N(6)-carboxybiotinyl-L-lysyl-[protein] + acetyl-CoA = N(6)-biotinyl-L-lysyl-[protein] + malonyl-CoA. It participates in lipid metabolism; malonyl-CoA biosynthesis; malonyl-CoA from acetyl-CoA: step 1/1. In terms of biological role, component of the acetyl coenzyme A carboxylase (ACC) complex. First, biotin carboxylase catalyzes the carboxylation of biotin on its carrier protein (BCCP) and then the CO(2) group is transferred by the carboxyltransferase to acetyl-CoA to form malonyl-CoA. This is Acetyl-coenzyme A carboxylase carboxyl transferase subunit alpha from Clostridium perfringens (strain 13 / Type A).